A 399-amino-acid chain; its full sequence is Sphingosine-1-phosphate phosphatase 2 (399 aa).

The next 4 helical transmembrane spans lie at 88-108 (YLFQ…FLPF), 121-141 (LIII…VLKW), 160-180 (YGMP…LLIS), and 185-205 (YQYP…LVCL). A phosphatase sequence motif I region spans residues 136–144 (KDVLKWPRP). The segment at 163 to 166 (PSTH) is phosphatase sequence motif II. The active-site Proton donor is the histidine 166. The tract at residues 206-217 (SRLYTGMHTVLD) is phosphatase sequence motif III. The Nucleophile role is filled by histidine 213. Transmembrane regions (helical) follow at residues 219 to 239 (LGGV…WTFI), 247 to 267 (PLFP…YPVS), 280 to 300 (ILAA…FQLV), 318 to 338 (TYML…ILLV), and 371 to 391 (VPYK…FVPM).

It belongs to the type 2 lipid phosphate phosphatase family. Expressed strongly in kidney and heart, followed by brain, colon, small intestine and lung. Not detected in skeletal muscle, thymus, spleen, liver, placenta, and peripheral blood leukocytes.

The protein resides in the endoplasmic reticulum membrane. The enzyme catalyses sphinganine 1-phosphate + H2O = sphinganine + phosphate. The catalysed reaction is sphing-4-enine 1-phosphate + H2O = sphing-4-enine + phosphate. It carries out the reaction (4R)-hydroxysphinganine 1-phosphate + H2O = (4R)-hydroxysphinganine + phosphate. Functionally, has specific phosphohydrolase activity towards sphingoid base 1-phosphates. Has high phosphohydrolase activity against dihydrosphingosine-1-phosphate and sphingosine-1-phosphate (S1P) in vitro. Sphingosine-1-phosphate phosphatase activity is needed for efficient recycling of sphingosine into the sphingolipid synthesis pathway. May play a role in attenuating intracellular sphingosine 1-phosphate (S1P) signaling. May play a role in pro-inflammatory signaling. Plays a role in the regulation of pancreatic islet beta-cell endoplasmic reticulum stress and proliferation. The sequence is that of Sphingosine-1-phosphate phosphatase 2 from Homo sapiens (Human).